We begin with the raw amino-acid sequence, 375 residues long: 23S rRNA (uracil(747)-C(5))-methyltransferase RlmC (375 aa).

Positions 3, 11, 14, and 87 each coordinate [4Fe-4S] cluster. Residues glutamine 212, phenylalanine 241, glutamate 262, and asparagine 307 each contribute to the S-adenosyl-L-methionine site. The active-site Nucleophile is the cysteine 334.

It belongs to the class I-like SAM-binding methyltransferase superfamily. RNA M5U methyltransferase family. RlmC subfamily.

It carries out the reaction uridine(747) in 23S rRNA + S-adenosyl-L-methionine = 5-methyluridine(747) in 23S rRNA + S-adenosyl-L-homocysteine + H(+). Its function is as follows. Catalyzes the formation of 5-methyl-uridine at position 747 (m5U747) in 23S rRNA. The protein is 23S rRNA (uracil(747)-C(5))-methyltransferase RlmC of Shigella flexneri serotype 5b (strain 8401).